The chain runs to 1027 residues: Error-prone DNA polymerase (1027 aa).

It belongs to the DNA polymerase type-C family. DnaE2 subfamily.

It is found in the cytoplasm. The catalysed reaction is DNA(n) + a 2'-deoxyribonucleoside 5'-triphosphate = DNA(n+1) + diphosphate. In terms of biological role, DNA polymerase involved in damage-induced mutagenesis and translesion synthesis (TLS). It is not the major replicative DNA polymerase. The polypeptide is Error-prone DNA polymerase (Dechloromonas aromatica (strain RCB)).